An 88-amino-acid polypeptide reads, in one-letter code: Homeobox protein knotted-1-like 2 (88 aa).

Residues 4–24 enclose the ELK domain; the sequence is ELKHELKQGYRDKLVDIREEI. Positions 25 to 88 form a DNA-binding region, homeobox; TALE-type; the sequence is LRKRRAGKLP…NQRKRNWHNN (64 aa).

The protein belongs to the TALE/KNOX homeobox family. Expressed in all tissues examined. Highest expression in leaves.

The protein resides in the nucleus. This chain is Homeobox protein knotted-1-like 2 (KNOX2), found in Zea mays (Maize).